The primary structure comprises 62 residues: Large ribosomal subunit protein bL28 (62 aa).

It belongs to the bacterial ribosomal protein bL28 family.

This chain is Large ribosomal subunit protein bL28, found in Carboxydothermus hydrogenoformans (strain ATCC BAA-161 / DSM 6008 / Z-2901).